We begin with the raw amino-acid sequence, 392 residues long: ATP phosphoribosyltransferase regulatory subunit (392 aa).

It belongs to the class-II aminoacyl-tRNA synthetase family. HisZ subfamily. As to quaternary structure, heteromultimer composed of HisG and HisZ subunits.

It localises to the cytoplasm. It participates in amino-acid biosynthesis; L-histidine biosynthesis; L-histidine from 5-phospho-alpha-D-ribose 1-diphosphate: step 1/9. In terms of biological role, required for the first step of histidine biosynthesis. May allow the feedback regulation of ATP phosphoribosyltransferase activity by histidine. This Listeria monocytogenes serotype 4b (strain F2365) protein is ATP phosphoribosyltransferase regulatory subunit.